A 250-amino-acid chain; its full sequence is 5-oxoprolinase subunit A (250 aa).

It belongs to the LamB/PxpA family. In terms of assembly, forms a complex composed of PxpA, PxpB and PxpC.

It catalyses the reaction 5-oxo-L-proline + ATP + 2 H2O = L-glutamate + ADP + phosphate + H(+). In terms of biological role, catalyzes the cleavage of 5-oxoproline to form L-glutamate coupled to the hydrolysis of ATP to ADP and inorganic phosphate. This Staphylococcus aureus (strain bovine RF122 / ET3-1) protein is 5-oxoprolinase subunit A.